The following is a 269-amino-acid chain: RBPJ-interacting and tubulin-associated protein 1 (269 aa).

A Nuclear export signal motif is present at residues 5–17; the sequence is VELAISGMQTLHV. Disordered stretches follow at residues 67-94 and 145-269; these read GTGVSQALGANGSCESTSSSGSTPTLTP and PATP…PPWK. The span at 79-93 shows a compositional bias: low complexity; sequence SCESTSSSGSTPTLT. A Nuclear localization signal motif is present at residues 92–108; that stretch reads LTPRKKNKYRLISHTPS. The interaction with RBPJ/RBPSUH stretch occupies residues 128–156; sequence WMARGDAAKLHALFWTPPATPRGSHSPRP. Residues 156–269 are interaction with tubulin; it reads PRETPVRCVH…ATQKTKPPWK (114 aa). Composition is skewed to polar residues over residues 202–220 and 247–269; these read LTHPNVPSTGHTPASSPCT and VSVSVPTTPRQGGATQKTKPPWK.

It belongs to the RITA family. As to quaternary structure, interacts with RBPJ/RBPSUH.

It localises to the cytoplasm. The protein resides in the nucleus. The protein localises to the cytoskeleton. Its subcellular location is the microtubule organizing center. It is found in the centrosome. Tubulin-binding protein that acts as a negative regulator of Notch signaling pathway. Shuttles between the cytoplasm and the nucleus and mediates the nuclear export of RBPJ/RBPSUH, thereby preventing the interaction between RBPJ/RBPSUH and NICD product of Notch proteins (Notch intracellular domain), leading to down-regulate Notch-mediated transcription. May play a role in neurogenesis. The chain is RBPJ-interacting and tubulin-associated protein 1 (RITA1) from Bos taurus (Bovine).